A 66-amino-acid chain; its full sequence is uncharacterized protein (66 aa).

This is an uncharacterized protein from Frog virus 3 (isolate Goorha) (FV-3).